The sequence spans 445 residues: Phosphoglucosamine mutase (445 aa).

Residue Ser99 is the Phosphoserine intermediate of the active site. Ser99, Asp242, Asp244, and Asp246 together coordinate Mg(2+). Ser99 carries the phosphoserine modification.

The protein belongs to the phosphohexose mutase family. It depends on Mg(2+) as a cofactor. Post-translationally, activated by phosphorylation.

It catalyses the reaction alpha-D-glucosamine 1-phosphate = D-glucosamine 6-phosphate. Catalyzes the conversion of glucosamine-6-phosphate to glucosamine-1-phosphate. The chain is Phosphoglucosamine mutase from Nitratiruptor sp. (strain SB155-2).